The sequence spans 127 residues: Protein P6 (127 aa).

It is found in the virion membrane. The polypeptide is Protein P6 (VI) (Pseudoalteromonas espejiana (Bacteriophage PM2)).